A 313-amino-acid chain; its full sequence is Glyoxylate/hydroxypyruvate reductase A HPR2 (313 aa).

NADP(+)-binding positions include L152–I155, S174–T176, I230–R232, and D256. R232 is an active-site residue. E261 is a catalytic residue. The active-site Proton donor is H279. H279–G281 is an NADP(+) binding site.

Belongs to the D-isomer specific 2-hydroxyacid dehydrogenase family. GyaR subfamily. As to quaternary structure, homodimer.

The protein resides in the cytoplasm. The enzyme catalyses glycolate + NADP(+) = glyoxylate + NADPH + H(+). The catalysed reaction is (R)-glycerate + NAD(+) = 3-hydroxypyruvate + NADH + H(+). It catalyses the reaction (R)-glycerate + NADP(+) = 3-hydroxypyruvate + NADPH + H(+). Strongly inhibited by oxalate. Catalyzes the NADPH-dependent reduction of glyoxylate and hydroxypyruvate (HP) into glycolate and glycerate in the cytoplasm, thus providing a cytosolic bypass to the photorespiratory core cycle. Mostly active in the presence of NADPH and hydroxypyruvate. The sequence is that of Glyoxylate/hydroxypyruvate reductase A HPR2 (HPR2) from Arabidopsis thaliana (Mouse-ear cress).